The sequence spans 284 residues: MKRLPAVAGSFYESDPKKLKMQIEWSFRHNIGPRDIPKQTYEKKKRDNLFFVVPHAGYIYSGPVAAHSYYYLVSEGRPDVVIILGPNHTGLGSYVSAWPKGEWETPLGSVKIDEEILMQLVKESEVIDLDEKSHLYEHSIEVQLPFLQYFFDDDFKIVPIVIMMQTPEIAEFLADAIYNVMQKNPDKDIVVLASSDMNHYDPHEITVKKDEEAIEKIQQLDYKGLYEVVEGKDVTLCGYGPIMVNLILAKKFGKKAYILKHATSGDTSGPKDSVVGYLAARFGS.

Belongs to the MEMO1 family.

The chain is MEMO1 family protein M1425_2054 from Saccharolobus islandicus (strain M.14.25 / Kamchatka #1) (Sulfolobus islandicus).